The following is a 369-amino-acid chain: Serine proteinase inhibitor 1 (369 aa).

The protein belongs to the serpin family. Poxviruses subfamily.

Its function is as follows. Important in virulence. This is Serine proteinase inhibitor 1 (SPI-1) from Oryctolagus cuniculus (Rabbit).